The sequence spans 201 residues: Small ribosomal subunit protein uS4c (201 aa).

A disordered region spans residues 15–43; the sequence is LGALPGLTSKRPRSGSDLRNQSRSGKRSQ. One can recognise an S4 RNA-binding domain in the interval 89–150; the sequence is MRLDNILFRL…KERSRALIQN (62 aa).

It belongs to the universal ribosomal protein uS4 family. Part of the 30S ribosomal subunit. Contacts protein S5. The interaction surface between S4 and S5 is involved in control of translational fidelity.

It is found in the plastid. The protein localises to the chloroplast. Its function is as follows. One of the primary rRNA binding proteins, it binds directly to 16S rRNA where it nucleates assembly of the body of the 30S subunit. Functionally, with S5 and S12 plays an important role in translational accuracy. The chain is Small ribosomal subunit protein uS4c (rps4) from Amborella trichopoda.